We begin with the raw amino-acid sequence, 129 residues long: Antileukoproteinase (129 aa).

A signal peptide spans 1 to 22 (GRGLLPFVLLALGIXAPWAVEG). WAP domains are found at residues 25–73 (NALK…LNPV) and 79–127 (VKVK…LTPV). 8 disulfide bridges follow: cysteine 32–cysteine 61, cysteine 40–cysteine 65, cysteine 48–cysteine 60, cysteine 54–cysteine 69, cysteine 86–cysteine 115, cysteine 93–cysteine 119, cysteine 102–cysteine 114, and cysteine 108–cysteine 123. Residues 81 to 129 (VKPGKCPVVYGQCMMLNPPNHCKTDSQCLGDLKCCKSMCGKVCLTPVKA) are elastase inhibitory domain.

Interacts with GRN; interaction protects progranulin from proteolysis. As to expression, found in pregnant endometrium and myometrium, placenta, allantoic fluids, fetal cord blood, and fetal liver. Also found in uterus and lung.

The protein resides in the secreted. Its function is as follows. Acid-stable proteinase inhibitor with strong affinities for trypsin, chymotrypsin, elastase, and cathepsin G. Modulates the inflammatory and immune responses after bacterial infection, and after infection by the intracellular parasite L.major. Down-regulates responses to bacterial lipopolysaccharide (LPS). Plays a role in regulating the activation of NF-kappa-B and inflammatory responses. Has antimicrobial activity against mycobacteria, but not against salmonella. Contributes to normal resistance against infection by M.tuberculosis. Required for normal resistance to infection by L.major. Required for normal wound healing, probably by preventing tissue damage by limiting protease activity. Together with ELANE, required for normal differentiation and proliferation of bone marrow myeloid cells. The protein is Antileukoproteinase (SLPI) of Sus scrofa (Pig).